A 180-amino-acid polypeptide reads, in one-letter code: Transcription factor HES-7.1-B (180 aa).

A bHLH domain is found at 13-70 (HRKLLKPLVEKRRRERINNSLEKLRIFLSQTLKSEKLKNPKVEKAEILECTVQFLQSR). The 33-residue stretch at 84 to 116 (YQSGFQHCLETTLHFMNSKPDMNGVTKELLSHQ) folds into the Orange domain. The short motif at 176–179 (WRPW) is the WRPW motif element.

As to quaternary structure, transcription repression requires formation of a complex with a corepressor protein of the Groucho/TLE family. As to expression, expressed in the presumptive midbrain-hindbrain boundary (MHB) as early as the early gastrula stage (stage 10.5). Expression in the MHB continues through to tailbud stage. Also transiently expressed in the eye anlage at late neurula stage.

The protein resides in the nucleus. Its function is as follows. Transcriptional repressor. Represses transcription from both N box- and E box-containing promoters. Demarcates the prospective midbrain-hindbrain boundary (MHB) region in the neuroectoderm in early gastrulae embryos by repressing transcription of a number of target genes. The chain is Transcription factor HES-7.1-B (hes7.1-b) from Xenopus laevis (African clawed frog).